Consider the following 753-residue polypeptide: Enhancer of polycomb-like protein 1 (753 aa).

Disordered stretches follow at residues 1–75 (MAAA…RDLH) and 429–490 (VRTE…LPPA). The segment covering 46 to 71 (LDSNELEPSQVHHLNSNASSSSTQQP) has biased composition (polar residues). Residues 429 to 449 (VRTEDEEREKKREKKKQDQEL) show a composition bias toward basic and acidic residues. Over residues 450–463 (ALKQQQALQQQQQQ) the composition is skewed to low complexity.

It belongs to the enhancer of polycomb family. As to quaternary structure, component of the NuA4 histone acetyltransferase complex.

It localises to the nucleus. Component of the NuA4 histone acetyltransferase complex which is involved in transcriptional activation of selected genes principally by acetylation of nucleosomal histone H4 and H2A. The NuA4 complex is also involved in DNA repair. Involved in gene silencing by neighboring heterochromatin, blockage of the silencing spreading along the chromosome, and required for cell cycle progression through G2/M. The chain is Enhancer of polycomb-like protein 1 (EPL1) from Candida albicans (strain SC5314 / ATCC MYA-2876) (Yeast).